The chain runs to 129 residues: Small ribosomal subunit protein uS11 (129 aa).

The protein belongs to the universal ribosomal protein uS11 family. As to quaternary structure, part of the 30S ribosomal subunit. Interacts with proteins S7 and S18. Binds to IF-3.

In terms of biological role, located on the platform of the 30S subunit, it bridges several disparate RNA helices of the 16S rRNA. Forms part of the Shine-Dalgarno cleft in the 70S ribosome. The sequence is that of Small ribosomal subunit protein uS11 from Bartonella bacilliformis (strain ATCC 35685 / KC583 / Herrer 020/F12,63).